A 428-amino-acid chain; its full sequence is Phosphomethylpyrimidine synthase 2 (428 aa).

Residues methionine 94, tyrosine 123, histidine 162, 184-186 (SRG), 225-228 (NGMR), and glutamate 264 each bind substrate. Histidine 268 provides a ligand contact to Zn(2+). Tyrosine 291 contacts substrate. A Zn(2+)-binding site is contributed by histidine 332. Residues cysteine 408, cysteine 411, and cysteine 415 each contribute to the [4Fe-4S] cluster site.

Belongs to the ThiC family. [4Fe-4S] cluster is required as a cofactor.

The catalysed reaction is 5-amino-1-(5-phospho-beta-D-ribosyl)imidazole + S-adenosyl-L-methionine = 4-amino-2-methyl-5-(phosphooxymethyl)pyrimidine + CO + 5'-deoxyadenosine + formate + L-methionine + 3 H(+). It functions in the pathway cofactor biosynthesis; thiamine diphosphate biosynthesis. In terms of biological role, catalyzes the synthesis of the hydroxymethylpyrimidine phosphate (HMP-P) moiety of thiamine from aminoimidazole ribotide (AIR) in a radical S-adenosyl-L-methionine (SAM)-dependent reaction. This Methanosarcina acetivorans (strain ATCC 35395 / DSM 2834 / JCM 12185 / C2A) protein is Phosphomethylpyrimidine synthase 2.